The primary structure comprises 204 residues: Thymidine kinase (204 aa).

ATP-binding positions include 23–30 (GSMFSGKT) and 95–98 (DEAQ). The active-site Proton acceptor is Glu-96. The Zn(2+) site is built by Cys-152, Cys-155, Cys-184, and Cys-187.

It belongs to the thymidine kinase family. Homotetramer.

The protein localises to the cytoplasm. The catalysed reaction is thymidine + ATP = dTMP + ADP + H(+). The sequence is that of Thymidine kinase from Porphyromonas gingivalis (strain ATCC 33277 / DSM 20709 / CIP 103683 / JCM 12257 / NCTC 11834 / 2561).